Reading from the N-terminus, the 246-residue chain is NH(3)-dependent NAD(+) synthetase (246 aa).

ATP is bound at residue 29-36 (GLSGGIDS). D35 contacts Mg(2+). R110 provides a ligand contact to deamido-NAD(+). ATP is bound at residue T130. E135 contacts Mg(2+). ATP is bound by residues K159 and S181.

Belongs to the NAD synthetase family. Homodimer.

It catalyses the reaction deamido-NAD(+) + NH4(+) + ATP = AMP + diphosphate + NAD(+) + H(+). The protein operates within cofactor biosynthesis; NAD(+) biosynthesis; NAD(+) from deamido-NAD(+) (ammonia route): step 1/1. Its function is as follows. Catalyzes the ATP-dependent amidation of deamido-NAD to form NAD. Uses ammonia as a nitrogen source. This is NH(3)-dependent NAD(+) synthetase from Campylobacter jejuni subsp. jejuni serotype O:23/36 (strain 81-176).